We begin with the raw amino-acid sequence, 542 residues long: Membrane protein insertase YidC (542 aa).

6 helical membrane passes run 6 to 26, 326 to 346, 350 to 370, 421 to 441, 458 to 478, and 501 to 521; these read NILL…WQTD, LVVD…LLMF, FVGN…GMLY, GGCL…WVLL, LSVQ…MFLM, and VIFT…WLVG.

It belongs to the OXA1/ALB3/YidC family. Type 1 subfamily. As to quaternary structure, interacts with the Sec translocase complex via SecD. Specifically interacts with transmembrane segments of nascent integral membrane proteins during membrane integration.

It localises to the cell inner membrane. Required for the insertion and/or proper folding and/or complex formation of integral membrane proteins into the membrane. Involved in integration of membrane proteins that insert both dependently and independently of the Sec translocase complex, as well as at least some lipoproteins. Aids folding of multispanning membrane proteins. The sequence is that of Membrane protein insertase YidC from Shewanella loihica (strain ATCC BAA-1088 / PV-4).